Reading from the N-terminus, the 352-residue chain is C-X-C chemokine receptor type 4 (352 aa).

Residues 1–21 (MEGISIYTSDNYTEEMGSGDY) form an important for chemokine binding and signaling region. The Extracellular segment spans residues 1–38 (MEGISIYTSDNYTEEMGSGDYDSIKEPCFREENAHFNR). A Sulfotyrosine modification is found at Tyr7. N-linked (GlcNAc...) asparagine glycosylation is present at Asn11. Tyr12 is modified (sulfotyrosine). Ser18 is a glycosylation site (O-linked (Xyl...) (chondroitin sulfate) serine). Tyr21 carries the post-translational modification Sulfotyrosine. Cystine bridges form between Cys28–Cys274 and Cys109–Cys186. The helical transmembrane segment at 39–63 (IFLPTIYSIIFLTGIVGNGLVILVM) threads the bilayer. The Cytoplasmic portion of the chain corresponds to 64–77 (GYQKKLRSMTDKYR). A helical transmembrane segment spans residues 78–99 (LHLSVADLLFVITLPFWAVDAV). The chemokine binding stretch occupies residues 94-97 (WAVD). Over 100-110 (ANWYFGNFLCK) the chain is Extracellular. Residues 111–130 (AVHVIYTVNLYSSVLILAFI) form a helical membrane-spanning segment. The chemokine binding stretch occupies residues 113–117 (HVIYT). Over 131–154 (SLDRYLAIVHATNSQKPRKLLAEK) the chain is Cytoplasmic. The short motif at 133 to 135 (DRY) is the Important for signaling element. The tract at residues 135–147 (YLAIVHATNSQKP) is involved in dimerization; when bound to chemokine. A helical membrane pass occupies residues 155–174 (VVYVGVWIPALLLTIPDFIF). Residues 175-195 (ASVSEADDRYICDRFYPNDLW) are Extracellular-facing. Positions 186 to 190 (CDRFY) are chemokine binding, important for signaling. The interval 191–210 (PNDLWVVVFQFQHIMVGLIL) is involved in dimerization. A helical membrane pass occupies residues 196–216 (VVVFQFQHIMVGLILPGIVIL). Over 217 to 241 (SCYCIIISKLSHSKGHQKRKALKTT) the chain is Cytoplasmic. A helical transmembrane segment spans residues 242–261 (VILILAFFACWLPYYIGISI). Residues 262 to 282 (DSFILLEIIKQGCEFENTVHK) lie on the Extracellular side of the membrane. The interval 266–268 (LLE) is involved in dimerization. The helical transmembrane segment at 283–302 (WISITEALAFFHCCLNPILY) threads the bilayer. Residues 303 to 352 (AFLGAKFKTSAQHALTSVSRGSSLKILSKGKRGGHSSVSTESESSSFHSS) are Cytoplasmic-facing. Phosphoserine is present on residues Ser319 and Ser321. A phosphoserine; by PKC and GRK6 mark is found at Ser324 and Ser325. The interval 329–352 (LSKGKRGGHSSVSTESESSSFHSS) is disordered. Ser330 bears the Phosphoserine; by GRK6 mark. Residue Lys331 forms a Glycyl lysine isopeptide (Lys-Gly) (interchain with G-Cter in ubiquitin) linkage. Residues 337–352 (HSSVSTESESSSFHSS) show a composition bias toward low complexity. The residue at position 339 (Ser339) is a Phosphoserine; by GRK6. Residues Ser348 and Ser351 each carry the phosphoserine modification.

Belongs to the G-protein coupled receptor 1 family. Monomer. Can form homodimers. Interacts with CD164. Interacts with ARRB2; the interaction is dependent on the C-terminal phosphorylation of CXCR4 and allows activation of MAPK1 and MAPK3. Interacts with ARR3; the interaction is dependent on the C-terminal phosphorylation of CXCR4 and modulates calcium mobilization. Interacts with RNF113A; the interaction, enhanced by CXCL12, promotes CXCR4 ubiquitination and subsequent degradation. Interacts (via the cytoplasmic C-terminal) with ITCH (via the WW domains I and II); the interaction, enhanced by CXCL12, promotes CXCR4 ubiquitination and leads to its degradation. Interacts with extracellular ubiquitin. Interacts with DBN1; this interaction is enhanced by antigenic stimulation. Following LPS binding, may form a complex with GDF5, HSP90AA1 and HSPA8. In terms of processing, phosphorylated on agonist stimulation. Rapidly phosphorylated on serine and threonine residues in the C-terminal. Phosphorylation at Ser-324 and Ser-325 leads to recruitment of ITCH, ubiquitination and protein degradation. Post-translationally, ubiquitinated after ligand binding, leading to its degradation. Ubiquitinated by ITCH at the cell membrane on agonist stimulation. The ubiquitin-dependent mechanism, endosomal sorting complex required for transport (ESCRT), then targets CXCR4 for lysosomal degradation. This process is dependent also on prior Ser-/Thr-phosphorylation in the C-terminal of CXCR4. Also binding of ARRB1 to STAM negatively regulates CXCR4 sorting to lysosomes though modulating ubiquitination of SFR5S. Sulfation is required for efficient binding of CXCL12/SDF-1alpha and promotes its dimerization. In terms of processing, O- and N-glycosylated. N-glycosylation can mask coreceptor function. The O-glycosylation chondroitin sulfate attachment does not affect interaction with CXCL12/SDF-1alpha nor its coreceptor activity.

It localises to the cell membrane. It is found in the cell junction. The protein localises to the early endosome. The protein resides in the late endosome. Its subcellular location is the lysosome. Functionally, receptor for the C-X-C chemokine CXCL12/SDF-1 that transduces a signal by increasing intracellular calcium ion levels and enhancing MAPK1/MAPK3 activation. Involved in the AKT signaling cascade. Plays a role in regulation of cell migration, e.g. during wound healing. Acts as a receptor for extracellular ubiquitin; leading to enhanced intracellular calcium ions and reduced cellular cAMP levels. Binds bacterial lipopolysaccharide (LPS) et mediates LPS-induced inflammatory response, including TNF secretion by monocytes. Involved in hematopoiesis and in cardiac ventricular septum formation. Also plays an essential role in vascularization of the gastrointestinal tract, probably by regulating vascular branching and/or remodeling processes in endothelial cells. Involved in cerebellar development. In the CNS, could mediate hippocampal-neuron survival. In Macaca fascicularis (Crab-eating macaque), this protein is C-X-C chemokine receptor type 4 (CXCR4).